Consider the following 228-residue polypeptide: uncharacterized protein (228 aa).

The N-terminal stretch at 1 to 28 (MRKKRVITCVMAASLTLGSLLPAGYASA) is a signal peptide.

This is an uncharacterized protein from Bacillus subtilis (strain 168).